The following is a 61-amino-acid chain: Large ribosomal subunit protein uL30 (61 aa).

It belongs to the universal ribosomal protein uL30 family. As to quaternary structure, part of the 50S ribosomal subunit.

This Corynebacterium glutamicum (strain R) protein is Large ribosomal subunit protein uL30.